The primary structure comprises 687 residues: A-kinase anchor protein 8 (687 aa).

Residues 1-195 form an interaction with MCM2 region; sequence MEQSYGGYGA…FLRGRGQGRF (195 aa). Positions 1–210 are interaction with DPY30; sequence MEQSYGGYGA…SSTFIRSDPF (210 aa). S72 carries the phosphoserine modification. Positions 104–124 are disordered; the sequence is SKEGGRGGISSGGEGMQDRDS. An Asymmetric dimethylarginine; alternate modification is found at R109. Position 109 is an omega-N-methylarginine; alternate (R109). Gly residues predominate over residues 109-118; that stretch reads RGGISSGGEG. The tract at residues 109–201 is interaction with DDX5; it reads RGGISSGGEG…QGRFQDRSNS (93 aa). The nuclear matrix targeting site stretch occupies residues 127–152; that stretch reads RFQPYESYDSRPCMPEHTPYRPSYSY. Residues 189 to 221 are disordered; that stretch reads GRGQGRFQDRSNSSTFIRSDPFMPPSASSEPLS. Position 199 is a phosphoserine (S199). Omega-N-methylarginine occurs at positions 233 and 277. The segment at 278-380 is disordered; sequence SQTRIRDWPR…KQRRRDRMRD (103 aa). 2 stretches are compositionally biased toward basic and acidic residues: residues 281 to 295 and 312 to 321; these read RIRD…ERFG and PDAKLARADS. The short motif at 287 to 304 is the Bipartite nuclear localization signal element; it reads RRRGFERFGPDNMGRKRK. Residue K315 forms a Glycyl lysine isopeptide (Lys-Gly) (interchain with G-Cter in SUMO2) linkage. Residues S321, S326, and S337 each carry the phosphoserine modification. Acidic residues predominate over residues 322–332; the sequence is EGDLSENDDGA. Residues 336–358 are compositionally biased toward basic and acidic residues; the sequence is RSGDEEFRGEDDLCDSRKQRGEK. Residues 385–448 are involved in chromatin-binding; that stretch reads RIQFACSVCK…NKKIEKRRQE (64 aa). 2 C2H2 AKAP95-type zinc fingers span residues 390-412 and 479-502; these read CSVC…SKFH and CLAC…SVDH. The involved in condensin complex recruitment stretch occupies residues 523-565; that stretch reads SVLNNKHIVKMLEKYLKGEDPFVNETADLETEGDENLGEEKET. A Phosphothreonine modification is found at T553. A Glycyl lysine isopeptide (Lys-Gly) (interchain with G-Cter in SUMO2) cross-link involves residue K563. The tract at residues 568–585 is RII-binding; the sequence is EVAAEVLAEVITAAVKAV. The tract at residues 572 to 589 is required for interaction with MYCBP; it reads EVLAEVITAAVKAVEGDG. Residues 606-687 form a disordered region; that stretch reads VDTAEAGSDS…DAEAKDTPTE (82 aa). Positions 633–648 are enriched in basic and acidic residues; that stretch reads RNMEDMARGEAAEARN. Low complexity predominate over residues 649–666; that stretch reads EAAVPAAAAGSPVPVIAI. Phosphoserine is present on S659.

This sequence belongs to the AKAP95 family. As to quaternary structure, binds to dimeric RII-alpha regulatory subunit of PKA during mitosis. Interacts (via C-terminus) with FIGN. Interacts with NCAPD2, CCND1, CCND3, MCM2, RPS6KA1, PDE4A, CASP3. Interacts with DDX5, CCNE1. Interacts with NFKB1; detetcted in the cytoplasm. Interacts with MYCBP; MYCBP is translocated to the nucleus and the interaction prevents the association of the PKA catalytic subunit leading to suppression of PKA activity. Interacts with DPY30; mediating AKAP8 association with at least the MLL4/WBP7 HMT complex. Interacts with HDAC3; increased during mitosis. Interacts with GJA1; in the nucleus and in the nuclear membrane; the nuclear association increases with progress of cell cycle G1, S and G2 phase and decreases in M phase. Post-translationally, phosphorylated on tyrosine residues probably by SRC subfamily protein kinases; multiple phosphorylation is leading to dissociation from nuclear structures implicated in chromatin structural changes. Widely expressed. The protein has been detected in liver, fibroblasts, granulosa, myoblast, lymphoma and Sertoli cells.

Its subcellular location is the nucleus matrix. It localises to the nucleus. The protein resides in the nucleolus. It is found in the cytoplasm. Its function is as follows. Anchoring protein that mediates the subcellular compartmentation of cAMP-dependent protein kinase (PKA type II). Acts as an anchor for a PKA-signaling complex onto mitotic chromosomes, which is required for maintenance of chromosomes in a condensed form throughout mitosis. Recruits condensin complex subunit NCAPD2 to chromosomes required for chromatin condensation; the function appears to be independent from PKA-anchoring. May help to deliver cyclin D/E to CDK4 to facilitate cell cycle progression. Required for cell cycle G2/M transition and histone deacetylation during mitosis. In mitotic cells recruits HDAC3 to the vicinity of chromatin leading to deacetylation and subsequent phosphorylation at 'Ser-10' of histone H3; in this function may act redundantly with AKAP8L. Involved in nuclear retention of RPS6KA1 upon ERK activation thus inducing cell proliferation. May be involved in regulation of DNA replication by acting as scaffold for MCM2. Enhances HMT activity of the KMT2 family MLL4/WBP7 complex and is involved in transcriptional regulation. In a teratocarcinoma cell line is involved in retinoic acid-mediated induction of developmental genes implicating H3 'Lys-4' methylation. May be involved in recruitment of active CASP3 to the nucleus in apoptotic cells. May act as a carrier protein of GJA1 for its transport to the nucleus. May play a repressive role in the regulation of rDNA transcription. Preferentially binds GC-rich DNA in vitro. In cells, associates with ribosomal RNA (rRNA) chromatin, preferentially with rRNA promoter and transcribed regions. Involved in modulation of Toll-like receptor signaling. Required for the cAMP-dependent suppression of TNF-alpha in early stages of LPS-induced macrophage activation; the function probably implicates targeting of PKA to NFKB1. The chain is A-kinase anchor protein 8 (Akap8) from Rattus norvegicus (Rat).